Consider the following 87-residue polypeptide: Kappa-4-bungarotoxin (87 aa).

Positions 1 to 21 (MKTLLLTLVVVTIVCLDLGYT) are cleaved as a signal peptide. Cystine bridges form between Cys-24/Cys-42, Cys-35/Cys-63, Cys-48/Cys-52, Cys-67/Cys-79, and Cys-80/Cys-85.

This sequence belongs to the three-finger toxin family. Long-chain subfamily. Kappa-neurotoxin sub-subfamily. As to quaternary structure, homo- and heterodimer; non-covalently linked. Expressed by the venom gland.

It localises to the secreted. Postsynaptic neurotoxin that binds and inhibits neuronal nicotinic acetylcholine receptors (nAChR) with high affinity (IC(50)&lt;100 nM). Is a selective, and slowly reversible antagonist of alpha-3/CHRNA3-containing and some alpha-4/CHRNA4-containing AChRs. The sequence is that of Kappa-4-bungarotoxin from Bungarus multicinctus (Many-banded krait).